Here is a 244-residue protein sequence, read N- to C-terminus: Venom nerve growth factor 2 (244 aa).

Residues 1 to 18 form the signal peptide; the sequence is MSMLCYTLIIAFLIGIWA. The propeptide occupies 19 to 125; sequence APKSEDNVPL…TLNRNIRAKR (107 aa). Residues 47-66 show a composition bias toward basic and acidic residues; the sequence is GLKTSRNTDQRHPAPKKAED. The tract at residues 47–69 is disordered; the sequence is GLKTSRNTDQRHPAPKKAEDQEL. Disulfide bonds link C139–C205 and C181–C233.

It belongs to the NGF-beta family. Homodimer; non-covalently linked. In terms of tissue distribution, expressed by the venom gland.

The protein resides in the secreted. Nerve growth factor is important for the development and maintenance of the sympathetic and sensory nervous systems. It stimulates division and differentiation of sympathetic and embryonic sensory neurons as well as basal forebrain cholinergic neurons in the brain. Its relevance in the snake venom is not clear. However, it has been shown to inhibit metalloproteinase-dependent proteolysis of platelet glycoprotein Ib alpha, suggesting a metalloproteinase inhibition to prevent metalloprotease autodigestion and/or protection against prey proteases. Binds a lipid between the two protein chains in the homodimer. The lipid-bound form promotes histamine relase from mouse mast cells, contrary to the lipid-free form. The polypeptide is Venom nerve growth factor 2 (Notechis scutatus scutatus (Mainland tiger snake)).